The chain runs to 75 residues: Small ribosomal subunit protein bS18 (75 aa).

It belongs to the bacterial ribosomal protein bS18 family. In terms of assembly, part of the 30S ribosomal subunit. Forms a tight heterodimer with protein bS6.

Binds as a heterodimer with protein bS6 to the central domain of the 16S rRNA, where it helps stabilize the platform of the 30S subunit. The sequence is that of Small ribosomal subunit protein bS18 from Methylobacillus flagellatus (strain ATCC 51484 / DSM 6875 / VKM B-1610 / KT).